The sequence spans 115 residues: uncharacterized protein (115 aa).

The region spanning 1-91 (MTEYNANSIR…SELEGFKNVS (91 aa)) is the HTH arsR-type domain. The H-T-H motif DNA-binding region spans 30-53 (ASLISHTLLLSYATVLRHLRILND).

In terms of biological role, essential for virus function. This is an uncharacterized protein from Saccharolobus solfataricus (Sulfolobus solfataricus).